The chain runs to 615 residues: 1-deoxy-D-xylulose-5-phosphate synthase (615 aa).

Residues H72 and G111 to S113 each bind thiamine diphosphate. D142 contacts Mg(2+). Thiamine diphosphate contacts are provided by residues G143 to A144, N171, Y278, and E360. N171 serves as a coordination point for Mg(2+).

Belongs to the transketolase family. DXPS subfamily. Homodimer. It depends on Mg(2+) as a cofactor. The cofactor is thiamine diphosphate.

It catalyses the reaction D-glyceraldehyde 3-phosphate + pyruvate + H(+) = 1-deoxy-D-xylulose 5-phosphate + CO2. It participates in metabolic intermediate biosynthesis; 1-deoxy-D-xylulose 5-phosphate biosynthesis; 1-deoxy-D-xylulose 5-phosphate from D-glyceraldehyde 3-phosphate and pyruvate: step 1/1. Its function is as follows. Catalyzes the acyloin condensation reaction between C atoms 2 and 3 of pyruvate and glyceraldehyde 3-phosphate to yield 1-deoxy-D-xylulose-5-phosphate (DXP). This Campylobacter jejuni subsp. jejuni serotype O:6 (strain 81116 / NCTC 11828) protein is 1-deoxy-D-xylulose-5-phosphate synthase.